The primary structure comprises 258 residues: Heat-labile enterotoxin A chain (258 aa).

The first 18 residues, 1–18, serve as a signal peptide directing secretion; the sequence is MKNITFIFFILLASPLYA. An NAD(+)-binding site is contributed by 25 to 39; the sequence is RADSRPPDEIKRSGG. Glu130 is an active-site residue. Cys205 and Cys217 are disulfide-bonded.

Belongs to the enterotoxin A family. In terms of assembly, heterohexamer of one A chain and of five B chains.

In terms of biological role, the biological activity of the toxin is produced by the A chain, which activates intracellular adenyl cyclase. This chain is Heat-labile enterotoxin A chain (eltA), found in Escherichia coli.